Here is a 652-residue protein sequence, read N- to C-terminus: Sodium-dependent phosphate transporter 2 (652 aa).

The Extracellular segment spans residues 1–5 (MAMDE). The chain crosses the membrane as a helical span at residues 6–26 (YLWMVILGFIIAFILAFSVGA). Residues 27–46 (NDVANSFGTAVGSGVVTLRQ) lie on the Cytoplasmic side of the membrane. A helical membrane pass occupies residues 47-67 (ACILASIFETTGSVLLGAKVG). Topologically, residues 68–86 (ETIRKGIIDVNLYNETVET) are extracellular. A glycan (N-linked (GlcNAc...) asparagine) is linked at Asn-81. Residues 87–107 (LMAGEVSAMVGSAVWQLIASF) traverse the membrane as a helical segment. Topologically, residues 108–109 (LR) are cytoplasmic. A helical transmembrane segment spans residues 110–130 (LPISGTHCIVGSTIGFSLVAI). The Extracellular portion of the chain corresponds to 131–142 (GTKGVQWMELVK). Residues 143 to 163 (IVASWFISPLLSGFMSGLLFV) traverse the membrane as a helical segment. The Cytoplasmic portion of the chain corresponds to 164–190 (LIRIFILKKEDPVPNGLRALPVFYAAT). A helical membrane pass occupies residues 191–211 (IAINVFSIMYTGAPVLGLVLP). Topologically, residues 212–213 (MW) are extracellular. The chain crosses the membrane as a helical span at residues 214 to 234 (AIALISFGVALLFAFFVWLFV). At 235 to 482 (CPWMRRKITG…EEKEEKDAPE (248 aa)) the chain is on the cytoplasmic side. 4 positions are modified to phosphoserine: Ser-253, Ser-256, Ser-259, and Ser-268. The interval 273–307 (ELPGAKANDDSTIPLTGAAGETLGTSEGTSAGSHP) is disordered. A compositionally biased stretch (polar residues) spans 295–304 (LGTSEGTSAG). Phosphoserine occurs at positions 316 and 385. Residues 458-477 (SELADPDQPREDPAEEEKEE) form a disordered region. The chain crosses the membrane as a helical span at residues 483-503 (VHLLFHFLQVLTACFGSFAHG). Residues 504-530 (GNDVSNAIGPLVALWLIYKQGGVTQEA) lie on the Extracellular side of the membrane. A helical membrane pass occupies residues 531 to 551 (ATPVWLLFYGGVGICTGLWVW). Residues 552 to 571 (GRRVIQTMGKDLTPITPSSG) are Cytoplasmic-facing. The chain crosses the membrane as a helical span at residues 572–586 (FTIELASAFTVVIAS). The Extracellular portion of the chain corresponds to 587 to 593 (NIGLPVS). The helical transmembrane segment at 594–609 (TTHCKVGSVVAVGWIR) threads the bilayer. Over 610–621 (SRKAVDWRLFRN) the chain is Cytoplasmic. Residues 622-642 (IFVAWFVTVPVAGLFSAAVMA) traverse the membrane as a helical segment. The Extracellular portion of the chain corresponds to 643-652 (LLMYGILPYV).

It belongs to the inorganic phosphate transporter (PiT) (TC 2.A.20) family. Homodimer. As to expression, ubiquitously expressed.

Its subcellular location is the cell membrane. It localises to the apical cell membrane. The catalysed reaction is 2 Na(+)(out) + phosphate(out) = 2 Na(+)(in) + phosphate(in). In terms of biological role, sodium-phosphate symporter which preferentially transports the monovalent form of phosphate with a stoichiometry of two sodium ions per phosphate ion. Plays a critical role in the determination of bone quality and strength by providing phosphate for bone mineralization. Required to maintain normal cerebrospinal fluid phosphate levels. Mediates phosphate-induced calcification of vascular smooth muscle cells (VCMCs) and can functionally compensate for loss of SLC20A1 in VCMCs. Functionally, (Microbial infection) Functions as a retroviral receptor and confers human cells susceptibility to infection to amphotropic murine leukemia virus (A-MuLV), 10A1 murine leukemia virus (10A1 MLV) and some feline leukemia virus subgroup B (FeLV-B) variants. This Homo sapiens (Human) protein is Sodium-dependent phosphate transporter 2 (SLC20A2).